The sequence spans 153 residues: Interleukin-4 (153 aa).

Positions 1 to 24 (MGLTSQLLPPLFFLLACAGNFAHG) are cleaved as a signal peptide. 3 cysteine pairs are disulfide-bonded: cysteine 27/cysteine 151, cysteine 48/cysteine 89, and cysteine 70/cysteine 123. A glycan (N-linked (GlcNAc...) asparagine) is linked at asparagine 62. Asparagine 129 carries N-linked (GlcNAc...) asparagine glycosylation.

Belongs to the IL-4/IL-13 family.

It localises to the secreted. Participates in at least several B-cell activation processes as well as of other cell types. It is a costimulator of DNA-synthesis. It induces the expression of class II MHC molecules on resting B-cells. It enhances both secretion and cell surface expression of IgE and IgG1. It also regulates the expression of the low affinity Fc receptor for IgE (CD23) on both lymphocytes and monocytes. Positively regulates IL31RA expression in macrophages. Stimulates autophagy in dendritic cells by interfering with mTORC1 signaling and through the induction of RUFY4. The sequence is that of Interleukin-4 (IL4) from Macaca mulatta (Rhesus macaque).